Reading from the N-terminus, the 271-residue chain is Interleukin-1 alpha (271 aa).

Residues 1–112 (MAKVPDMFED…DSEEEIIKPR (112 aa)) constitute a propeptide that is removed on maturation. Lys82 bears the N6-acetyllysine mark. Residues 82–86 (KKRRL) form a nuclear localization signal (NLS) region. The residue at position 87 (Ser87) is a Phosphoserine. 5 N-linked (GlcNAc...) asparagine glycosylation sites follow: Asn102, Asn121, Asn137, Asn141, and Asn211.

This sequence belongs to the IL-1 family. In terms of assembly, monomer. Interacts with TMED10; the interaction mediates the translocation from the cytoplasm into the ERGIC (endoplasmic reticulum-Golgi intermediate compartment) and thereby secretion. Interacts with IL1R1. Interacts with S100A13; this interaction is the first step in the export of IL1A, followed by direct translocation of this complex across the plasma membrane. Acetylated within its nuclear localization sequence, which impacts subcellular localization. Post-translationally, proteolytic processed by CAPN1 in a calcium-dependent manner. Cleavage from 31 kDa precursor to 18 kDa biologically active molecules. In terms of processing, phosphorylated. Phosphorylation greatly enhances susceptibility to digestion and promotes the conversion of pre-IL1A alpha to the biologically active IL1A.

The protein resides in the nucleus. It localises to the cytoplasm. Its subcellular location is the secreted. Cytokine constitutively present intracellularly in nearly all resting non-hematopoietic cells that plays an important role in inflammation and bridges the innate and adaptive immune systems. After binding to its receptor IL1R1 together with its accessory protein IL1RAP, forms the high affinity interleukin-1 receptor complex. Signaling involves the recruitment of adapter molecules such as MYD88, IRAK1 or IRAK4. In turn, mediates the activation of NF-kappa-B and the three MAPK pathways p38, p42/p44 and JNK pathways. Within the cell, acts as an alarmin and cell death results in its liberation in the extracellular space after disruption of the cell membrane to induce inflammation and alert the host to injury or damage. In addition to its role as a danger signal, which occurs when the cytokine is passively released by cell necrosis, directly senses DNA damage and acts as signal for genotoxic stress without loss of cell integrity. The polypeptide is Interleukin-1 alpha (IL1A) (Macaca mulatta (Rhesus macaque)).